A 223-amino-acid chain; its full sequence is UPF0441 protein ETA_04310 (223 aa).

Positions 166–223 (YGAATPGRTMTVPKSALAPKPATTSTVTRGGFGESVAKQNTMQRNSSSTGSANRSMGG) are disordered. Polar residues predominate over residues 202 to 223 (AKQNTMQRNSSSTGSANRSMGG).

This sequence belongs to the UPF0441 family.

This is UPF0441 protein ETA_04310 from Erwinia tasmaniensis (strain DSM 17950 / CFBP 7177 / CIP 109463 / NCPPB 4357 / Et1/99).